Consider the following 323-residue polypeptide: Methenyltetrahydromethanopterin cyclohydrolase (323 aa).

The protein belongs to the MCH family. Homodimer.

It localises to the cytoplasm. It carries out the reaction 5,10-methenyl-5,6,7,8-tetrahydromethanopterin + H2O = N(5)-formyl-5,6,7,8-tetrahydromethanopterin + H(+). It functions in the pathway one-carbon metabolism; formaldehyde degradation; formate from formaldehyde (H(4)MPT route): step 3/5. Functionally, catalyzes the hydrolysis of methenyl-H(4)MPT(+) to 5-formyl-H(4)MPT. The protein is Methenyltetrahydromethanopterin cyclohydrolase (mch) of Methylorubrum extorquens (strain ATCC 14718 / DSM 1338 / JCM 2805 / NCIMB 9133 / AM1) (Methylobacterium extorquens).